A 35-amino-acid polypeptide reads, in one-letter code: Beta/omega-theraphotoxin-Bp1a (35 aa).

Disulfide bonds link Cys2–Cys16, Cys9–Cys21, and Cys15–Cys28.

It belongs to the neurotoxin 10 (Hwtx-1) family. 54 (ProTx-1) subfamily. An unnatural amidation at Ser-35 provokes a 14-fold increased toxin ability to inhibit Nav1.2/SCN2A and a ~2-fold decreased toxin ability to inhibit both Nav1.5/SCN5A and Nav1.7/SCN9A. Expressed by the venom gland.

It is found in the secreted. In terms of biological role, ion channel impairing toxin that inhibits voltage-gated calcium channel Cav3.1/CACNA1G (IC(50)=53 nM), voltage-gated potassium channels Kv2.1/KCNB1 (IC(50)=411 nM), all sodium channels tested (Nav1.2/SCN2A (IC(50)=60-104 nM), Nav1.5/SCN5A (IC(50)=76-358 nM), Nav1.6/SCN8A (IC(50)=21-133 nM), Nav1.7/SCN9A (IC(50)=51-95 nM), and Nav1.8/SCN10A) as well as the nociceptor cation channel TRPA1 (IC(50)=389 nM). Acts as a potent and selective blocker of voltage-gated calcium channel Cav3.1/CACNA1G, but not of Cav3.2/CACNA1H, and Cav3.3/CACNA1I. On Nav1.7/SCN9A, primarily interacts with the DII and DIV voltage-sensor domains. Also acts as an inhibitor of nociceptor cation channel TRPA1 (IC(50)~389 nM) by binding to the S1-S4 gating domain of TRPA1. It shows moderate affinity for lipid bilayers. The sequence is that of Beta/omega-theraphotoxin-Bp1a from Bumba pulcherrimaklaasi (Tarantula spider).